Here is a 95-residue protein sequence, read N- to C-terminus: Protein TusB (95 aa).

It belongs to the DsrH/TusB family. In terms of assembly, heterohexamer, formed by a dimer of trimers. The hexameric TusBCD complex contains 2 copies each of TusB, TusC and TusD. The TusBCD complex interacts with TusE.

It localises to the cytoplasm. In terms of biological role, part of a sulfur-relay system required for 2-thiolation of 5-methylaminomethyl-2-thiouridine (mnm(5)s(2)U) at tRNA wobble positions. This Escherichia coli (strain K12 / MC4100 / BW2952) protein is Protein TusB.